The sequence spans 108 residues: Sperm-egg fusion protein LLCFC1 (108 aa).

Residues 1–30 form the signal peptide; that stretch reads MTSLGSQLHRATFLTALLLLLLLQVKGVKT. Residues 39–49 show a composition bias toward basic and acidic residues; it reads GDKSQKDKVSS. The segment at 39–64 is disordered; that stretch reads GDKSQKDKVSSEDQGEEEYEEHFEAS.

In terms of tissue distribution, detected in testicular germ cells and spermatozoa (at protein level). Abundantly expressed in testis.

It localises to the secreted. In terms of biological role, sperm protein required for fusion of sperm with the egg membrane during fertilization. This chain is Sperm-egg fusion protein LLCFC1, found in Mus musculus (Mouse).